We begin with the raw amino-acid sequence, 162 residues long: Ribosome maturation factor RimP (162 aa).

The protein belongs to the RimP family.

The protein localises to the cytoplasm. In terms of biological role, required for maturation of 30S ribosomal subunits. The chain is Ribosome maturation factor RimP from Cupriavidus pinatubonensis (strain JMP 134 / LMG 1197) (Cupriavidus necator (strain JMP 134)).